The sequence spans 444 residues: DNA repair protein RadA (444 aa).

The C4-type zinc finger occupies 8-25; the sequence is CSNCGNISPKWSGQCFDC. 89–96 serves as a coordination point for ATP; it reads GDPGIGKS. Positions 248–252 match the RadA KNRFG motif motif; it reads KNRFG. A lon-protease-like region spans residues 347–444; that stretch reads EVYLSIAGGL…HLKDLKEIIK (98 aa).

This sequence belongs to the RecA family. RadA subfamily.

Functionally, DNA-dependent ATPase involved in processing of recombination intermediates, plays a role in repairing DNA breaks. Stimulates the branch migration of RecA-mediated strand transfer reactions, allowing the 3' invading strand to extend heteroduplex DNA faster. Binds ssDNA in the presence of ADP but not other nucleotides, has ATPase activity that is stimulated by ssDNA and various branched DNA structures, but inhibited by SSB. Does not have RecA's homology-searching function. The sequence is that of DNA repair protein RadA from Rickettsia conorii (strain ATCC VR-613 / Malish 7).